A 475-amino-acid chain; its full sequence is Glutamate--tRNA ligase 2 (475 aa).

A 'HIGH' region motif is present at residues 11–21; the sequence is PSPTGFLHIGG. Basic and acidic residues predominate over residues 116–133; sequence AEGRPPRYDGTWRDKDPA. The tract at residues 116-137 is disordered; it reads AEGRPPRYDGTWRDKDPAEAPS. The short motif at 240–244 is the 'KMSKS' region element; it reads KLSKR. An ATP-binding site is contributed by Lys-243.

Belongs to the class-I aminoacyl-tRNA synthetase family. Glutamate--tRNA ligase type 1 subfamily. In terms of assembly, monomer.

It is found in the cytoplasm. The catalysed reaction is tRNA(Glu) + L-glutamate + ATP = L-glutamyl-tRNA(Glu) + AMP + diphosphate. In terms of biological role, catalyzes the attachment of glutamate to tRNA(Glu) in a two-step reaction: glutamate is first activated by ATP to form Glu-AMP and then transferred to the acceptor end of tRNA(Glu). The sequence is that of Glutamate--tRNA ligase 2 from Chelativorans sp. (strain BNC1).